A 442-amino-acid chain; its full sequence is D-serine dehydratase (442 aa).

Lys-118 bears the N6-(pyridoxal phosphate)lysine mark.

It belongs to the serine/threonine dehydratase family. DsdA subfamily. In terms of assembly, monomer. Pyridoxal 5'-phosphate is required as a cofactor.

The enzyme catalyses D-serine = pyruvate + NH4(+). The protein is D-serine dehydratase of Escherichia coli (strain 55989 / EAEC).